A 173-amino-acid chain; its full sequence is Co-chaperone protein HscB homolog (173 aa).

Positions 5–77 (CHFAQFDLQP…PRRALYLLTL (73 aa)) constitute a J domain.

The protein belongs to the HscB family. Interacts with HscA and stimulates its ATPase activity.

Its function is as follows. Co-chaperone involved in the maturation of iron-sulfur cluster-containing proteins. Seems to help targeting proteins to be folded toward HscA. The polypeptide is Co-chaperone protein HscB homolog (Pseudomonas aeruginosa (strain UCBPP-PA14)).